A 514-amino-acid chain; its full sequence is Extracellular exo-inulinase inuE (514 aa).

A signal peptide spans 1–18 (MRAFLALIFLTFVMNVES). Substrate-binding positions include 33 to 34 (ND) and glutamine 52. Catalysis depends on aspartate 34, which acts as the Nucleophile. Asparagine 56 is a glycosylation site (N-linked (GlcNAc...) asparagine). Tryptophan 60 and serine 95 together coordinate substrate. N-linked (GlcNAc...) asparagine glycans are attached at residues asparagine 104 and asparagine 110. Residue 162–163 (RD) coordinates substrate. N-linked (GlcNAc...) asparagine glycosylation is found at asparagine 197 and asparagine 203. Substrate-binding residues include glutamate 214 and tryptophan 300. Glutamate 214 functions as the Proton donor/acceptor in the catalytic mechanism. Residues asparagine 357, asparagine 371, asparagine 389, and asparagine 422 are each glycosylated (N-linked (GlcNAc...) asparagine).

It belongs to the glycosyl hydrolase 32 family.

The protein localises to the secreted. It catalyses the reaction Hydrolysis of terminal, non-reducing (2-&gt;1)- and (2-&gt;6)-linked beta-D-fructofuranose residues in fructans.. Exo-inulinase involved in utilization of the plant storage polymer inulin, consisting of fructooligosaccharides with a degree of polymerization (DP) value from 2 to 60. Splits off terminal fructose units successively from the non-reducing end of the inulin molecule. This chain is Extracellular exo-inulinase inuE, found in Meyerozyma guilliermondii (Yeast).